Here is a 418-residue protein sequence, read N- to C-terminus: Glutamyl-tRNA reductase (418 aa).

Residues 49–52, Ser109, 114–116, and Gln120 each bind substrate; these read TCNR and EPQ. The Nucleophile role is filled by Cys50. Residue 189 to 194 participates in NADP(+) binding; it reads GAGETI.

This sequence belongs to the glutamyl-tRNA reductase family. In terms of assembly, homodimer.

It carries out the reaction (S)-4-amino-5-oxopentanoate + tRNA(Glu) + NADP(+) = L-glutamyl-tRNA(Glu) + NADPH + H(+). Its pathway is porphyrin-containing compound metabolism; protoporphyrin-IX biosynthesis; 5-aminolevulinate from L-glutamyl-tRNA(Glu): step 1/2. Catalyzes the NADPH-dependent reduction of glutamyl-tRNA(Glu) to glutamate 1-semialdehyde (GSA). This Enterobacter sp. (strain 638) protein is Glutamyl-tRNA reductase.